A 703-amino-acid chain; its full sequence is RING finger protein 214 (703 aa).

Disordered stretches follow at residues Met1 to Lys59, Gly104 to Ser134, and Ser146 to Leu197. Ala2 bears the N-acetylalanine mark. Phosphoserine is present on residues Ser15, Ser40, Ser47, and Ser54. Polar residues predominate over residues Thr37–Lys59. Ser176 and Ser196 each carry phosphoserine. The stretch at Gln220–Thr379 forms a coiled coil. The segment at Phe486–Val552 is disordered. The segment covering Leu493 to Pro504 has biased composition (low complexity). 3 positions are modified to phosphoserine: Ser497, Ser511, and Ser516. Pro residues predominate over residues Pro523–Gly536. The segment at Cys658–Pro700 adopts an RING-type; atypical zinc-finger fold.

In Homo sapiens (Human), this protein is RING finger protein 214 (RNF214).